Consider the following 137-residue polypeptide: 2-iminobutanoate/2-iminopropanoate deaminase (137 aa).

The residue at position 2 (serine 2) is an N-acetylserine. N6-succinyllysine is present on residues lysine 13 and lysine 67. Threonine 74 is modified (phosphothreonine). Serine 136 is subject to Phosphoserine.

Belongs to the RutC family. As to quaternary structure, homotrimer. Interacts with YTHDF2.

The protein resides in the cytoplasm. It is found in the nucleus. It localises to the peroxisome. The protein localises to the mitochondrion. It carries out the reaction 2-iminobutanoate + H2O = 2-oxobutanoate + NH4(+). The catalysed reaction is 2-iminopropanoate + H2O = pyruvate + NH4(+). Functionally, catalyzes the hydrolytic deamination of enamine/imine intermediates that form during the course of normal metabolism. May facilitate the release of ammonia from these potentially toxic reactive metabolites, reducing their impact on cellular components. It may act on enamine/imine intermediates formed by several types of pyridoxal-5'-phosphate-dependent dehydratases including L-threonine dehydratase. Its function is as follows. Also promotes endoribonucleolytic cleavage of some transcripts by promoting recruitment of the ribonuclease P/MRP complex. Acts by bridging YTHDF2 and the ribonuclease P/MRP complex. RIDA/HRSP12 binds to N6-methyladenosine (m6A)-containing mRNAs containing a 5'-GGUUC-3' motif: cooperative binding of RIDA/HRSP12 and YTHDF2 to such transcripts lead to recruitment of the ribonuclease P/MRP complex and subsequent endoribonucleolytic cleavage. In Bos taurus (Bovine), this protein is 2-iminobutanoate/2-iminopropanoate deaminase.